A 373-amino-acid polypeptide reads, in one-letter code: Dual-specificity RNA methyltransferase RlmN (373 aa).

Glu-94 acts as the Proton acceptor in catalysis. The Radical SAM core domain occupies 100-339; that stretch reads EEDRATLCVS…VIVRKTRGDD (240 aa). The cysteines at positions 107 and 344 are disulfide-linked. [4Fe-4S] cluster contacts are provided by Cys-114, Cys-118, and Cys-121. S-adenosyl-L-methionine-binding positions include 168–169, Ser-200, 222–224, and Asn-301; these read GE and SIH. Cys-344 functions as the S-methylcysteine intermediate in the catalytic mechanism.

Belongs to the radical SAM superfamily. RlmN family. The cofactor is [4Fe-4S] cluster.

It is found in the cytoplasm. The catalysed reaction is adenosine(2503) in 23S rRNA + 2 reduced [2Fe-2S]-[ferredoxin] + 2 S-adenosyl-L-methionine = 2-methyladenosine(2503) in 23S rRNA + 5'-deoxyadenosine + L-methionine + 2 oxidized [2Fe-2S]-[ferredoxin] + S-adenosyl-L-homocysteine. The enzyme catalyses adenosine(37) in tRNA + 2 reduced [2Fe-2S]-[ferredoxin] + 2 S-adenosyl-L-methionine = 2-methyladenosine(37) in tRNA + 5'-deoxyadenosine + L-methionine + 2 oxidized [2Fe-2S]-[ferredoxin] + S-adenosyl-L-homocysteine. Functionally, specifically methylates position 2 of adenine 2503 in 23S rRNA and position 2 of adenine 37 in tRNAs. m2A2503 modification seems to play a crucial role in the proofreading step occurring at the peptidyl transferase center and thus would serve to optimize ribosomal fidelity. This is Dual-specificity RNA methyltransferase RlmN from Shewanella loihica (strain ATCC BAA-1088 / PV-4).